A 484-amino-acid polypeptide reads, in one-letter code: UDP-N-acetylmuramoyl-L-alanyl-D-glutamate--2,6-diaminopimelate ligase (484 aa).

Residue S30 participates in UDP-N-acetyl-alpha-D-muramoyl-L-alanyl-D-glutamate binding. 111-117 (GTNGKTT) is an ATP binding site. Residues 153 to 154 (TT), S180, Q186, and R188 contribute to the UDP-N-acetyl-alpha-D-muramoyl-L-alanyl-D-glutamate site. K220 carries the post-translational modification N6-carboxylysine. Meso-2,6-diaminopimelate is bound by residues R378, 402–405 (DNPR), G455, and E459. A Meso-diaminopimelate recognition motif motif is present at residues 402 to 405 (DNPR).

The protein belongs to the MurCDEF family. MurE subfamily. It depends on Mg(2+) as a cofactor. Post-translationally, carboxylation is probably crucial for Mg(2+) binding and, consequently, for the gamma-phosphate positioning of ATP.

The protein localises to the cytoplasm. The enzyme catalyses UDP-N-acetyl-alpha-D-muramoyl-L-alanyl-D-glutamate + meso-2,6-diaminopimelate + ATP = UDP-N-acetyl-alpha-D-muramoyl-L-alanyl-gamma-D-glutamyl-meso-2,6-diaminopimelate + ADP + phosphate + H(+). The protein operates within cell wall biogenesis; peptidoglycan biosynthesis. Catalyzes the addition of meso-diaminopimelic acid to the nucleotide precursor UDP-N-acetylmuramoyl-L-alanyl-D-glutamate (UMAG) in the biosynthesis of bacterial cell-wall peptidoglycan. In Phocaeicola vulgatus (strain ATCC 8482 / DSM 1447 / JCM 5826 / CCUG 4940 / NBRC 14291 / NCTC 11154) (Bacteroides vulgatus), this protein is UDP-N-acetylmuramoyl-L-alanyl-D-glutamate--2,6-diaminopimelate ligase.